A 503-amino-acid chain; its full sequence is Cytochrome P450 monooxygenase roqO (503 aa).

A helical membrane pass occupies residues 11 to 31 (YSGTACAISLFIFGITLLFPF). N205 is a glycosylation site (N-linked (GlcNAc...) asparagine). C444 lines the heme pocket.

The protein belongs to the cytochrome P450 family. It depends on heme as a cofactor.

It localises to the membrane. Its pathway is alkaloid biosynthesis. In terms of biological role, cytochrome P450 monooxygenase; part of the gene cluster that mediates the biosynthesis of the mycotoxin meleagrin. The first stage is catalyzed by the dipeptide synthase roqA which condenses histidine and tryptophan to produce histidyltryptophanyldiketopiperazine (HTD). HTD is then converted to roquefortine C through two possible pathways. In the first pathway, prenyltransferase roqD transforms HTD to the intermediate roquefortine D, which is in turn converted to roquefortine C by the cytochrome P450 monooxygenase roqR. In the second pathway, HTD is first converted to the intermediate dehydrohistidyltryptophanyldi-ketopiperazine (DHTD) by roqR which is then prenylated by roqD to form roquefortine C. Roquefortine C can be further transformed to meleagrin via three more reactions including oxydation to glandicolin A by roqM, which is further reduced to glandicoline B by roqO. Finally, glandicoline B is converted to meleagrin by the glandicoline B O-methyltransferase roqN. More studies identified further branching and additional metabolites produced by the roquefortine/meleagrin cluster, including roquefortine F, roquefortine L, roquefortine M, roquefortine N and neoxaline. The polypeptide is Cytochrome P450 monooxygenase roqO (Penicillium rubens (strain ATCC 28089 / DSM 1075 / NRRL 1951 / Wisconsin 54-1255) (Penicillium chrysogenum)).